Reading from the N-terminus, the 347-residue chain is NADH-ubiquinone oxidoreductase chain 2 (347 aa).

Helical transmembrane passes span M1–M21, H25–M45, Y59–V79, I96–P116, V122–L142, M148–G168, M200–M220, I240–F260, N274–M294, and L325–L345.

This sequence belongs to the complex I subunit 2 family. As to quaternary structure, core subunit of respiratory chain NADH dehydrogenase (Complex I) which is composed of 45 different subunits. Interacts with TMEM242.

The protein localises to the mitochondrion inner membrane. It catalyses the reaction a ubiquinone + NADH + 5 H(+)(in) = a ubiquinol + NAD(+) + 4 H(+)(out). Functionally, core subunit of the mitochondrial membrane respiratory chain NADH dehydrogenase (Complex I) which catalyzes electron transfer from NADH through the respiratory chain, using ubiquinone as an electron acceptor. Essential for the catalytic activity and assembly of complex I. This Thoopterus nigrescens (Swift fruit bat) protein is NADH-ubiquinone oxidoreductase chain 2.